A 1140-amino-acid polypeptide reads, in one-letter code: MSYNYVVTAQKPTAVNGCVTGHFTSAEDLNLLIAKNTRLEIYVVTAEGLRPVKEVGMYGKIAVMELFRPKGESKDLLFILTAKYNVCILEYKQSGESIDIITRAHGNVQDRIGRPSETGIIGIIDPECRMIGLRLYDGLFKVIPLDRDNKELKAFNIRLEELHVIDVKFLYGCQAPTICFVYQDPQGRHVKTYEVSLREKEFNKGPWKQENVEAEASMVIAVPEPFGGAIIIGQESITYHNGDKYLAIAPPIIKQSTIVCHNRVDPNGSRYLLGDMEGRLFMLLLEKEEQMDGTVTLKDLRVELLGETSIAECLTYLDNGVVFVGSRLGDSQLVKLNVDSNEQGSYVVAMETFTNLGPIVDMCVVDLERQGQGQLVTCSGAFKEGSLRIIRNGIGIHEHASIDLPGIKGLWPLRSDPNRETDDTLVLSFVGQTRVLMLNGEEVEETELMGFVDDQQTFFCGNVAHQQLIQITSASVRLVSQEPKALVSEWKEPQAKNISVASCNSSQVVVAVGRALYYLQIHPQELRQISHTEMEHEVACLDITPLGDSNGLSPLCAIGLWTDISARILKLPSFELLHKEMLGGEIIPRSILMTTFESSHYLLCALGDGALFYFGLNIETGLLSDRKKVTLGTQPTVLRTFRSLSTTNVFACSDRPTVIYSSNHKLVFSNVNLKEVNYMCPLNSDGYPDSLALANNSTLTIGTIDEIQKLHIRTVPLYESPRKICYQEVSQCFGVLSSRIEVQDTSGGTTALRPSASTQALSSSVSSSKLFSSSTAPHETSFGEEVEVHNLLIIDQHTFEVLHAHQFLQNEYALSLVSCKLGKDPNTYFIVGTAMVYPEEAEPKQGRIVVFQYSDGKLQTVAEKEVKGAVYPMVEFNGKLLASINSTVRLYEWTTEKELRTECNHYNNIMALYLKTKGDFILVGDLMRSVLLLAYKPMEGNFEEIARDFNPNWMSAVEILDDDNFLGAENAFNLFVCQKDSAATTDEERQHLQEVGLFHLGEFVNVFCHGSLVMQNLGETSTPTQGSVLFGTVNGMIGLVTSLSESWYNLLLDMQNRLNKVIKSVGKIEHSFWRSFHTERKTEPATGFIDGDLIESFLDISRPKMQEVVANLQYDDGSGMKREATADDLIKVVEELTRIH.

S2 carries the N-acetylserine modification. The interval 2-768 (SYNYVVTAQK…QALSSSVSSS (767 aa)) is interaction with CDT1. Residues 13 to 356 (TAVNGCVTGH…VVAMETFTNL (344 aa)) form a WD repeat beta-propeller A region. The WD repeat beta-propeller B; Interaction with CUL4A stretch occupies residues 391–708 (RNGIGIHEHA…LTIGTIDEIQ (318 aa)). Residues 709–1043 (KLHIRTVPLY…NGMIGLVTSL (335 aa)) form a WD repeat beta-propeller C region. Residues 771 to 1140 (FSSSTAPHET…KVVEELTRIH (370 aa)) form an interaction with CDT1 and CUL4A region. The residue at position 1067 (K1067) is an N6-acetyllysine. K1121 participates in a covalent cross-link: Glycyl lysine isopeptide (Lys-Gly) (interchain with G-Cter in SUMO2). T1125 carries the post-translational modification Phosphothreonine.

It belongs to the DDB1 family. In terms of assembly, component of the UV-DDB complex which includes DDB1 and DDB2; the heterodimer dimerizes to give rise to a heterotetramer when bound to damaged DNA. The UV-DDB complex interacts with monoubiquitinated histone H2A and binds to XPC via the DDB2 subunit. Component of numerous DCX (DDB1-CUL4-X-box) E3 ubiquitin-protein ligase complexes which consist of a core of DDB1, CUL4A or CUL4B and RBX1. DDB1 may recruit specific substrate targeting subunits to the DCX complex. These substrate targeting subunits are generally known as DCAF (DDB1- and CUL4-associated factor) or CDW (CUL4-DDB1-associated WD40-repeat) proteins. Interacts with AMBRA1, ATG16L1, BTRC, CRBN, DCAF1, DCAF4, DCAF5, DCAF6, DCAF7, DCAF8, DCAF9, DCAF10, DCAF11, DCAF12, DCAF15, DCAF16, DCAF17, DDA1, DET1, DTL, ERCC8, FBXW5, FBXW8, GRWD1, KATNB1, NLE1, NUP43, PAFAH1B1, PHIP, PWP1, RBBP4, RBBP5, RBBP7, COP1, SNRNP40, DCAF1, WDR5, WDR5B, WDR12, WDR26, WDR39, WDR42, WDR53, WDR59, WDR61, WSB1, WSB2, LRWD1 and WDTC1. DCX complexes may associate with the COP9 signalosome, and this inhibits the E3 ubiquitin-protein ligase activity of the complex. Interacts with NF2, TSC1 and TSC2. Interacts with AGO1 and AGO2. Associates with the E3 ligase complex containing DYRK2, EDD/UBR5, DDB1 and DCAF1 proteins (EDVP complex). Interacts directly with DYRK2. DCX(DTL) complex interacts with FBXO11; does not ubiquitinate and degradate FBXO11. Interacts with TRPC4AP. Interacts with CRY1 and CRY2. The DDB1-CUL4A complex interacts with CRY1. May also interact with DCUN1D1, DCUN1D2, DCUN1D3 and DCUN1D5. Component of the DCX(DCAF13) E3 ubiquitin ligase complex, at least composed of CUL4 (CUL4A or CUL4B), DDB1, DCAF13 and RBX1. Interacts with DCAF13 (via WD40 domain). Post-translationally, phosphorylated by ABL1. In terms of processing, ubiquitinated by CUL4A. Subsequently degraded by ubiquitin-dependent proteolysis. Acetylated, promoting interaction with CUL4 (CUL4A or CUL4B) and subsequent formation of DCX (DDB1-CUL4-X-box) E3 ubiquitin-protein ligase complexes. Deacetylation by SIRT7 impairs the interaction with CUL4 (CUL4A or CUL4B) and formation of DCX (DDB1-CUL4-X-box) E3 ubiquitin-protein ligase complexes.

Its subcellular location is the cytoplasm. It is found in the nucleus. It functions in the pathway protein modification; protein ubiquitination. Functionally, protein, which is both involved in DNA repair and protein ubiquitination, as part of the UV-DDB complex and DCX (DDB1-CUL4-X-box) complexes, respectively. Core component of the UV-DDB complex (UV-damaged DNA-binding protein complex), a complex that recognizes UV-induced DNA damage and recruit proteins of the nucleotide excision repair pathway (the NER pathway) to initiate DNA repair. The UV-DDB complex preferentially binds to cyclobutane pyrimidine dimers (CPD), 6-4 photoproducts (6-4 PP), apurinic sites and short mismatches. Also functions as a component of numerous distinct DCX (DDB1-CUL4-X-box) E3 ubiquitin-protein ligase complexes which mediate the ubiquitination and subsequent proteasomal degradation of target proteins. The functional specificity of the DCX E3 ubiquitin-protein ligase complex is determined by the variable substrate recognition component recruited by DDB1. DCX(DDB2) (also known as DDB1-CUL4-ROC1, CUL4-DDB-ROC1 and CUL4-DDB-RBX1) may ubiquitinate histone H2A, histone H3 and histone H4 at sites of UV-induced DNA damage. The ubiquitination of histones may facilitate their removal from the nucleosome and promote subsequent DNA repair. DCX(DDB2) also ubiquitinates XPC, which may enhance DNA-binding by XPC and promote NER. DCX(DTL) plays a role in PCNA-dependent polyubiquitination of CDT1 and MDM2-dependent ubiquitination of TP53 in response to radiation-induced DNA damage and during DNA replication. DCX(ERCC8) (the CSA complex) plays a role in transcription-coupled repair (TCR). The DDB1-CUL4A-DTL E3 ligase complex regulates the circadian clock function by mediating the ubiquitination and degradation of CRY1. DDB1-mediated CRY1 degradation promotes FOXO1 protein stability and FOXO1-mediated gluconeogenesis in the liver. By acting on TET dioxygenses, essential for oocyte maintenance at the primordial follicle stage, hence essential for female fertility. Maternal factor required for proper zygotic genome activation and genome reprogramming. The sequence is that of DNA damage-binding protein 1 (DDB1) from Pongo abelii (Sumatran orangutan).